A 202-amino-acid chain; its full sequence is Protein-methionine-sulfoxide reductase heme-binding subunit MsrQ (202 aa).

Transmembrane regions (helical) follow at residues 8–28 (YAWLGPGVVLGGLLPTVFLLW), 50–70 (LALIVLTLSLACTPARVWLGW), 76–96 (IRKALGLLAAFYAVLHFGIYL), 114–134 (PFITSGFAALLLLLPLVLTSG), 148–168 (LLHRLVYLAAALGALHYWWGV), and 174–194 (GPLLAVLVLAALGLARLKTPA).

Belongs to the MsrQ family. In terms of assembly, heterodimer of a catalytic subunit (MsrP) and a heme-binding subunit (MsrQ). FMN is required as a cofactor. The cofactor is heme b.

The protein resides in the cell membrane. Part of the MsrPQ system that repairs oxidized cell envelope proteins containing methionine sulfoxide residues (Met-O), using respiratory chain electrons. Thus protects these proteins from oxidative-stress damage caused by reactive species of oxygen and chlorine. MsrPQ is essential for the maintenance of envelope integrity under bleach stress, rescuing a wide series of structurally unrelated cell envelope proteins from methionine oxidation. MsrQ provides electrons for reduction to the reductase catalytic subunit MsrP, using the quinone pool of the respiratory chain. This Deinococcus radiodurans (strain ATCC 13939 / DSM 20539 / JCM 16871 / CCUG 27074 / LMG 4051 / NBRC 15346 / NCIMB 9279 / VKM B-1422 / R1) protein is Protein-methionine-sulfoxide reductase heme-binding subunit MsrQ.